A 143-amino-acid polypeptide reads, in one-letter code: Large ribosomal subunit protein uL16 (143 aa).

This sequence belongs to the universal ribosomal protein uL16 family. In terms of assembly, part of the 50S ribosomal subunit.

In terms of biological role, binds 23S rRNA and is also seen to make contacts with the A and possibly P site tRNAs. In Oenococcus oeni (strain ATCC BAA-331 / PSU-1), this protein is Large ribosomal subunit protein uL16.